Consider the following 130-residue polypeptide: Small ribosomal subunit protein uS9 (130 aa).

This sequence belongs to the universal ribosomal protein uS9 family.

This Shewanella loihica (strain ATCC BAA-1088 / PV-4) protein is Small ribosomal subunit protein uS9.